The primary structure comprises 279 residues: Calcium-binding protein 4 (279 aa).

A compositionally biased stretch (basic and acidic residues) spans 1-12 (MAEEQGRGRHGP). The tract at residues 1–114 (MAEEQGRGRH…PGPQHDAAQR (114 aa)) is disordered. Position 42 is a phosphoserine (Ser42). A compositionally biased stretch (polar residues) spans 55–65 (GPSSSGEQTPM). 4 EF-hand domains span residues 133-168 (EELD…LGYM), 187-204 (GRVD…KLRE), 210-245 (LGLR…LLGE), and 247-279 (LVGP…LSRH). Ca(2+) is bound by residues Asp146, Asp148, Asp150, Tyr152, and Asp157. Ca(2+)-binding residues include Asp223, Asp225, Asp227, Arg229, Glu234, Asp260, Asn262, Asp264, Thr266, and Glu271.

In terms of assembly, interacts with CACNA1F and CACNA1D (via IQ domain) in a calcium independent manner. Interacts (via N-terminus) with UNC119. In terms of processing, phosphorylated. Phosphorylation levels change with the light conditions and regulate the activity. Expressed in the retina.

It is found in the cytoplasm. It localises to the presynapse. Its function is as follows. May play a role in normal synaptic function, probably through regulation of Ca(2+) influx and neurotransmitter release in photoreceptor synaptic terminals and in auditory transmission. Modulator of CACNA1F, shifting the activation range to more hyperpolarized voltages. This is Calcium-binding protein 4 (CABP4) from Bos taurus (Bovine).